The following is a 302-amino-acid chain: Cobalt-precorrin-6A reductase (302 aa).

Basic and acidic residues predominate over residues 1 to 10 (MQTPEIKEGT). The interval 1 to 37 (MQTPEIKEGTEQYLWRRKTMNPGDKGVKRKGSDRQRE) is disordered.

This sequence belongs to the precorrin-6x reductase family.

It catalyses the reaction Co-precorrin-6B + NAD(+) = Co-precorrin-6A + NADH + H(+). It participates in cofactor biosynthesis; adenosylcobalamin biosynthesis; cob(II)yrinate a,c-diamide from sirohydrochlorin (anaerobic route): step 7/10. Its function is as follows. Catalyzes the reduction of the macrocycle of cobalt-precorrin-6A to cobalt-precorrin-6B. This is Cobalt-precorrin-6A reductase (cbiJ) from Methanothermobacter thermautotrophicus (strain ATCC 29096 / DSM 1053 / JCM 10044 / NBRC 100330 / Delta H) (Methanobacterium thermoautotrophicum).